The following is a 507-amino-acid chain: ATP synthase subunit alpha, chloroplastic (507 aa).

Residue 170–177 (GDRQTGKT) coordinates ATP.

This sequence belongs to the ATPase alpha/beta chains family. In terms of assembly, F-type ATPases have 2 components, CF(1) - the catalytic core - and CF(0) - the membrane proton channel. CF(1) has five subunits: alpha(3), beta(3), gamma(1), delta(1), epsilon(1). CF(0) has four main subunits: a, b, b' and c.

It localises to the plastid. The protein localises to the chloroplast thylakoid membrane. It carries out the reaction ATP + H2O + 4 H(+)(in) = ADP + phosphate + 5 H(+)(out). Produces ATP from ADP in the presence of a proton gradient across the membrane. The alpha chain is a regulatory subunit. The polypeptide is ATP synthase subunit alpha, chloroplastic (Tetradesmus obliquus (Green alga)).